Reading from the N-terminus, the 150-residue chain is D-aminoacyl-tRNA deacylase (150 aa).

A Gly-cisPro motif, important for rejection of L-amino acids motif is present at residues 138 to 139; it reads GP.

Belongs to the DTD family. In terms of assembly, homodimer.

The protein localises to the cytoplasm. The catalysed reaction is glycyl-tRNA(Ala) + H2O = tRNA(Ala) + glycine + H(+). The enzyme catalyses a D-aminoacyl-tRNA + H2O = a tRNA + a D-alpha-amino acid + H(+). In terms of biological role, an aminoacyl-tRNA editing enzyme that deacylates mischarged D-aminoacyl-tRNAs. Also deacylates mischarged glycyl-tRNA(Ala), protecting cells against glycine mischarging by AlaRS. Acts via tRNA-based rather than protein-based catalysis; rejects L-amino acids rather than detecting D-amino acids in the active site. By recycling D-aminoacyl-tRNA to D-amino acids and free tRNA molecules, this enzyme counteracts the toxicity associated with the formation of D-aminoacyl-tRNA entities in vivo and helps enforce protein L-homochirality. This Christiangramia forsetii (strain DSM 17595 / CGMCC 1.15422 / KT0803) (Gramella forsetii) protein is D-aminoacyl-tRNA deacylase.